Consider the following 236-residue polypeptide: Ribonuclease HII (236 aa).

One can recognise an RNase H type-2 domain in the interval 27-219 (RILCGVDEAG…VRRALDGAPP (193 aa)). 3 residues coordinate a divalent metal cation: D33, E34, and D128. Positions 212–236 (RALDGAPPPAGDAVPQTDAKTAWAD) are disordered.

The protein belongs to the RNase HII family. Requires Mn(2+) as cofactor. Mg(2+) serves as cofactor.

Its subcellular location is the cytoplasm. The enzyme catalyses Endonucleolytic cleavage to 5'-phosphomonoester.. In terms of biological role, endonuclease that specifically degrades the RNA of RNA-DNA hybrids. In Ralstonia nicotianae (strain ATCC BAA-1114 / GMI1000) (Ralstonia solanacearum), this protein is Ribonuclease HII.